The following is a 114-amino-acid chain: MSLPSSRAARVPGPSGSLCALLALLLLLTPPGPLASAGPVSAVLTELRCTCLRVTLRVNPKTIGKLQVFPAGPQCSKVEVVASLKNGKQVCLDPEAPFLKKVIQKILDSGNKKN.

An N-terminal signal peptide occupies residues Met-1 to Ala-37. Intrachain disulfides connect Cys-49–Cys-75 and Cys-51–Cys-91.

This sequence belongs to the intercrine alpha (chemokine CxC) family.

Its subcellular location is the secreted. Chemotactic for neutrophil granulocytes. Signals through binding and activation of its receptors (CXCR1 and CXCR2). In addition to its chemotactic and angiogenic properties, it has strong antibacterial activity against Gram-positive and Gram-negative bacteria (90-fold-higher when compared to CXCL5 and CXCL7). This is C-X-C motif chemokine 6 (CXCL6) from Homo sapiens (Human).